The primary structure comprises 2035 residues: Proline-rich protein 12 (2035 aa).

4 disordered regions span residues 210-280 (GGGV…ERAL), 292-311 (RPAS…LQHY), 329-584 (CSPL…GAPG), and 645-685 (QAPS…GTPY). Positions 223–240 (QTPPYRPGPPDPPPPPRH) are enriched in pro residues. A compositionally biased stretch (low complexity) spans 249–261 (ASSSAATAAEPSS). The segment covering 296–305 (AQPPPPPPPA) has biased composition (pro residues). 2 positions are modified to phosphoserine: serine 330 and serine 338. Low complexity predominate over residues 338–364 (SPGAGEPSKGGPSGATAGAAGRATGPE). Residues 365-377 (TAGGGAAGGGGGY) are compositionally biased toward gly residues. 2 stretches are compositionally biased toward low complexity: residues 408-429 (STAT…AGKA) and 437-455 (SQAY…QAYG). Residues 476–487 (PPQPPSGPPPPG) show a composition bias toward pro residues. 2 stretches are compositionally biased toward polar residues: residues 490–501 (TCQSYSPDQLQG) and 520–534 (GLPT…STGH). Residues 540–555 (GHGGGWGPSSLGGGGE) show a composition bias toward gly residues. Serine 648 carries the phosphoserine modification. The span at 670-681 (GLGGSGGAGGAP) shows a compositional bias: gly residues. Threonine 735 is subject to Phosphothreonine. 4 disordered regions span residues 755–844 (AFLQ…PLQL), 851–870 (HGLE…SLEP), 879–920 (GALE…APRF), and 946–1061 (EMFG…CSTK). Pro residues predominate over residues 830–841 (PQPPPPPPPPMP). Residue serine 859 is modified to Phosphoserine. A compositionally biased stretch (pro residues) spans 1031–1046 (SAPPPPPPPPPPPPVS). Phosphoserine occurs at positions 1070 and 1128. 4 disordered regions span residues 1112 to 1244 (RRLP…DHNS), 1288 to 1355 (PLYQ…SPCK), 1367 to 1567 (TLPS…GEGI), and 1662 to 1839 (HRPP…PGRL). Over residues 1190–1199 (KPRGRGRGRG) the composition is skewed to basic residues. Positions 1200-1214 (RKAEEMGGTRLEPLK) are enriched in basic and acidic residues. Lysine 1214 bears the N6-acetyllysine mark. Threonine 1295 is subject to Phosphothreonine. Residue serine 1299 is modified to Phosphoserine. The segment covering 1314–1329 (QPPPPTVPTVPHPAPS) has biased composition (pro residues). A phosphoserine mark is found at serine 1372, serine 1373, and serine 1378. Residues 1449–1529 (PPTPPPAPTP…PPEEPPAPSP (81 aa)) are compositionally biased toward pro residues. Positions 1535 to 1547 (PDARPLHLAKKQE) are enriched in basic and acidic residues. At threonine 1555 the chain carries Phosphothreonine. Residue serine 1562 is modified to Phosphoserine. The segment covering 1698–1709 (ETPEKMTSEKPP) has biased composition (basic and acidic residues). Position 1699 is a phosphothreonine (threonine 1699). Residues 1710–1730 (EPAPEPAVPEPPAPEKPSPPR) show a composition bias toward pro residues. Residues 1731–1768 (PVEKEKEKEKEKEKEKERVTRPLRSERATSGRQMRTDR) are compositionally biased toward basic and acidic residues. Residues 1769–1779 (SLATGQSTTSR) show a composition bias toward polar residues. Residues 1817-1828 (SSSDSESSPGAP) are compositionally biased toward low complexity. At serine 1924 the chain carries Phosphoserine.

In terms of tissue distribution, expressed in brain.

The protein localises to the nucleus. It localises to the postsynaptic density. The protein resides in the synapse. Its subcellular location is the synaptosome. In Mus musculus (Mouse), this protein is Proline-rich protein 12.